A 324-amino-acid polypeptide reads, in one-letter code: dITP/XTP pyrophosphatase (324 aa).

Residues 1-126 (MTKSIFEYKD…SDNKSDFGDV (126 aa)) form a unknown region. The interval 127–324 (LLIATRNEGK…EVFPAWQNKQ (198 aa)) is NTP pyrophosphatase. 131–136 (TRNEGK) provides a ligand contact to substrate. D193 acts as the Proton acceptor in catalysis. Residue D193 participates in Mg(2+) binding. Substrate contacts are provided by residues S194, 277-280 (FGYD), K300, and 305-306 (HR).

This sequence belongs to the HAM1 NTPase family. Homodimer. The cofactor is Mg(2+).

It carries out the reaction XTP + H2O = XMP + diphosphate + H(+). The enzyme catalyses dITP + H2O = dIMP + diphosphate + H(+). It catalyses the reaction ITP + H2O = IMP + diphosphate + H(+). Its function is as follows. Pyrophosphatase that catalyzes the hydrolysis of nucleoside triphosphates to their monophosphate derivatives, with a high preference for the non-canonical purine nucleotides XTP (xanthosine triphosphate), dITP (deoxyinosine triphosphate) and ITP. Seems to function as a house-cleaning enzyme that removes non-canonical purine nucleotides from the nucleotide pool, thus preventing their incorporation into DNA/RNA and avoiding chromosomal lesions. The sequence is that of dITP/XTP pyrophosphatase from Streptococcus thermophilus (strain CNRZ 1066).